The sequence spans 208 residues: Small ribosomal subunit protein eS8 (208 aa).

Residues 1–27 (MGISRDNWHKRRRTGGKRKPVHKKRKY) are disordered. Positions 8–26 (WHKRRRTGGKRKPVHKKRK) are enriched in basic residues.

This sequence belongs to the eukaryotic ribosomal protein eS8 family. Component of the small ribosomal subunit. Identified in a IGF2BP1-dependent mRNP granule complex containing untranslated mRNAs. Part of the small subunit (SSU) processome, composed of more than 70 proteins and the RNA chaperone small nucleolar RNA (snoRNA) U3.

The protein resides in the cytoplasm. It localises to the membrane. Its subcellular location is the nucleus. The protein localises to the nucleolus. Functionally, component of the small ribosomal subunit. The ribosome is a large ribonucleoprotein complex responsible for the synthesis of proteins in the cell. Part of the small subunit (SSU) processome, first precursor of the small eukaryotic ribosomal subunit. During the assembly of the SSU processome in the nucleolus, many ribosome biogenesis factors, an RNA chaperone and ribosomal proteins associate with the nascent pre-rRNA and work in concert to generate RNA folding, modifications, rearrangements and cleavage as well as targeted degradation of pre-ribosomal RNA by the RNA exosome. In Danio rerio (Zebrafish), this protein is Small ribosomal subunit protein eS8 (rps8).